An 856-amino-acid polypeptide reads, in one-letter code: V-type proton ATPase 116 kDa subunit a 2 (856 aa).

The Cytoplasmic portion of the chain corresponds to 1–393; that stretch reads MGSLFRSESM…DAYGVGSYRE (393 aa). The helical transmembrane segment at 394 to 412 threads the bilayer; it reads VNPALFTIITFPFLFAVMF. Residues 413 to 414 lie on the Vacuolar side of the membrane; it reads GD. A helical membrane pass occupies residues 415-431; the sequence is FGHGFVMFLFALLLVLN. Over 432-445 the chain is Cytoplasmic; sequence ENHPRLSQSQEILR. The chain crosses the membrane as a helical span at residues 446-475; sequence MFFDGRYILLLMGLFSVYTGLIYNDCFSKS. The Vacuolar portion of the chain corresponds to 476 to 549; sequence VNLFGSGWNV…ATNRLTFLNS (74 aa). The chain crosses the membrane as a helical span at residues 550–569; the sequence is FKMKMSVILGIFHMTFGVVL. The Cytoplasmic segment spans residues 570 to 587; the sequence is GIFNHLHFRKKFNVYLVS. Residues 588 to 608 traverse the membrane as a helical segment; sequence VPEILFMLCIFGYLIFMIIYK. Topologically, residues 609 to 651 are vacuolar; that stretch reads WLAYSAETSREAPSILIEFINMFLFPTSKTHGLYPGQAHVQRV. Residues 652–671 form a helical membrane-spanning segment; the sequence is LVALTVLAVPVLFLGKPLFL. Residues 672-739 lie on the Cytoplasmic side of the membrane; it reads LWLHNGRNCF…EILMTQAIHS (68 aa). Phosphoserine is present on residues Ser695 and Ser700. The helical transmembrane segment at 740–764 threads the bilayer; sequence IEYCLGCISNTASYLRLWALSLAHA. At 765–785 the chain is on the vacuolar side; it reads QLSDVLWAMLMRVGLRVDTTY. The chain crosses the membrane as a helical span at residues 786-824; the sequence is GVLLLLPVMAFFAVLTIFILLVMEGLSAFLHAIRLHWVE. The Cytoplasmic segment spans residues 825 to 856; sequence FQNKFYVGAGTKFVPFSFSLLSSKFSNDDSIA.

Belongs to the V-ATPase 116 kDa subunit family. In terms of assembly, V-ATPase is a heteromultimeric enzyme made up of two complexes: the ATP-hydrolytic V1 complex and the proton translocation V0 complex. The V1 complex consists of three catalytic AB heterodimers that form a heterohexamer, three peripheral stalks each consisting of EG heterodimers, one central rotor including subunits D and F, and the regulatory subunits C and H. The proton translocation complex V0 consists of the proton transport subunit a, a ring of proteolipid subunits c9c'', rotary subunit d, subunits e and f, and the accessory subunits ATP6AP1/Ac45 and ATP6AP2/PRR. Directly interacts with PSCD2 through its N-terminal cytosolic tail in an intra-endosomal acidification-dependent manner. Disruption of this interaction results in the inhibition of endocytosis. Interacts with SPAAR. Relatively high expression in kidney and liver. Lower levels in the spleen, testis, and skeletal muscle. Also expressed in the thymus.

It is found in the cell membrane. The protein resides in the endosome membrane. Its function is as follows. Subunit of the V0 complex of vacuolar(H+)-ATPase (V-ATPase), a multisubunit enzyme composed of a peripheral complex (V1) that hydrolyzes ATP and a membrane integral complex (V0) that translocates protons. V-ATPase is responsible for acidifying and maintaining the pH of intracellular compartments and in some cell types, is targeted to the plasma membrane, where it is responsible for acidifying the extracellular environment. Essential component of the endosomal pH-sensing machinery. May play a role in maintaining the Golgi functions, such as glycosylation maturation, by controlling the Golgi pH. In aerobic conditions, involved in intracellular iron homeostasis, thus triggering the activity of Fe(2+) prolyl hydroxylase (PHD) enzymes, and leading to HIF1A hydroxylation and subsequent proteasomal degradation. The chain is V-type proton ATPase 116 kDa subunit a 2 (Atp6v0a2) from Mus musculus (Mouse).